The sequence spans 241 residues: Glutathione S-transferase omega-1 (241 aa).

Serine 2 is subject to N-acetylserine. The 80-residue stretch at 22 to 101 folds into the GST N-terminal domain; the sequence is GQIRVYSMRF…YLDEAYPEKK (80 aa). The active-site Nucleophile is the cysteine 32. An N6-acetyllysine modification is found at lysine 57. Residues lysine 59, valine 72, and 85–86 each bind glutathione; that span reads ES. The region spanning 106–228 is the GST C-terminal domain; sequence DPYEKACQKM…AKTYRDYLSL (123 aa). Phosphoserine is present on serine 129. An N6-acetyllysine mark is found at lysine 143, lysine 148, and lysine 152.

This sequence belongs to the GST superfamily. Omega family. Homodimer.

The protein localises to the cytoplasm. The protein resides in the cytosol. It carries out the reaction RX + glutathione = an S-substituted glutathione + a halide anion + H(+). The enzyme catalyses L-dehydroascorbate + 2 glutathione = glutathione disulfide + L-ascorbate. It catalyses the reaction methylarsonate + 2 glutathione + H(+) = methylarsonous acid + glutathione disulfide + H2O. In terms of biological role, exhibits glutathione-dependent thiol transferase and dehydroascorbate reductase activities. Has S-(phenacyl)glutathione reductase activity. Also has glutathione S-transferase activity. Participates in the biotransformation of inorganic arsenic and reduces monomethylarsonic acid (MMA) and dimethylarsonic acid. This Rattus norvegicus (Rat) protein is Glutathione S-transferase omega-1 (Gsto1).